We begin with the raw amino-acid sequence, 334 residues long: 3-keto-steroid reductase/17-beta-hydroxysteroid dehydrogenase 7 (334 aa).

Over 1-229 the chain is Extracellular; that stretch reads MRKVVLITGA…VTCPGVVMTN (229 aa). 8–15 serves as a coordination point for NAD(+); sequence TGASSGIG. N-linked (GlcNAc...) asparagine glycosylation occurs at Asn37. Substrate is bound at residue Ser171. An N-linked (GlcNAc...) asparagine glycan is attached at Asn178. Tyr193 serves as the catalytic Proton acceptor. Asn229 carries N-linked (GlcNAc...) asparagine glycosylation. The chain crosses the membrane as a helical span at residues 230–250; the sequence is LTYGILPPFVWTLLLPVIWLL. Residues 251–334 lie on the Cytoplasmic side of the membrane; sequence RFFAHAFTVT…ITIQKSDHHS (84 aa).

Belongs to the short-chain dehydrogenases/reductases (SDR) family. ERG27 subfamily. As to quaternary structure, binds to the short form of prolactin receptor. Phosphorylated. Most abundant in ovaries of pregnant animals.

The protein resides in the endoplasmic reticulum membrane. The catalysed reaction is 17beta-estradiol + NADP(+) = estrone + NADPH + H(+). It carries out the reaction a 3beta-hydroxysteroid + NADP(+) = a 3-oxosteroid + NADPH + H(+). It catalyses the reaction 4alpha-methyl-5alpha-cholest-7-en-3beta-ol + NADP(+) = 4alpha-methyl-5alpha-cholest-7-en-3-one + NADPH + H(+). The enzyme catalyses 4alpha-methyl-5alpha-cholest-8-en-3-one + NADPH + H(+) = 4alpha-methyl-5alpha-cholest-8-en-3beta-ol + NADP(+). The catalysed reaction is 3-dehydro-4alpha-methylzymosterol + NADPH + H(+) = 4alpha-methylzymosterol + NADP(+). It carries out the reaction zymosterone + NADPH + H(+) = zymosterol + NADP(+). It catalyses the reaction 5alpha-cholest-8-en-3-one + NADPH + H(+) = 5alpha-cholest-8-en-3beta-ol + NADP(+). The enzyme catalyses 5alpha-androstane-3beta,17beta-diol + NADP(+) = 17beta-hydroxy-5alpha-androstan-3-one + NADPH + H(+). The catalysed reaction is 5alpha-androstane-3alpha,17beta-diol + NADP(+) = 17beta-hydroxy-5alpha-androstan-3-one + NADPH + H(+). It functions in the pathway steroid biosynthesis; estrogen biosynthesis. It participates in steroid biosynthesis; zymosterol biosynthesis; zymosterol from lanosterol: step 5/6. In terms of biological role, bifunctional enzyme involved in steroid-hormone metabolism and cholesterol biosynthesis. Catalyzes the NADP(H)-dependent reduction of estrogens and androgens and regulates the biological potency of these steroids. Converts estrone (E1) to a more potent estrogen, 17beta-estradiol (E2). Converts dihydrotestosterone (DHT) to an inactive form. Also participates in the post-squalene cholesterol biosynthesis, as a 3-ketosteroid reductase. In Rattus norvegicus (Rat), this protein is 3-keto-steroid reductase/17-beta-hydroxysteroid dehydrogenase 7 (Hsd17b7).